The following is a 113-amino-acid chain: Hydrogenase maturation factor HypA (113 aa).

His-2 contributes to the Ni(2+) binding site. The Zn(2+) site is built by Cys-70, Cys-73, Cys-86, and Cys-88.

This sequence belongs to the HypA/HybF family.

Functionally, involved in the maturation of [NiFe] hydrogenases. Required for nickel insertion into the metal center of the hydrogenase. The polypeptide is Hydrogenase maturation factor HypA (Nostoc sp. (strain PCC 7120 / SAG 25.82 / UTEX 2576)).